Reading from the N-terminus, the 483-residue chain is Regulatory protein ViaA (483 aa).

Belongs to the ViaA family. Homodimer. Interacts with RavA.

It is found in the cytoplasm. Its function is as follows. Component of the RavA-ViaA chaperone complex, which may act on the membrane to optimize the function of some of the respiratory chains. ViaA stimulates the ATPase activity of RavA. The sequence is that of Regulatory protein ViaA from Escherichia fergusonii (strain ATCC 35469 / DSM 13698 / CCUG 18766 / IAM 14443 / JCM 21226 / LMG 7866 / NBRC 102419 / NCTC 12128 / CDC 0568-73).